We begin with the raw amino-acid sequence, 266 residues long: Glucosamine-6-phosphate deaminase (266 aa).

Residue Asp72 is the Proton acceptor; for enolization step of the active site. The active-site For ring-opening step is the Asp141. His143 acts as the Proton acceptor; for ring-opening step in catalysis. Glu148 (for ring-opening step) is an active-site residue.

Belongs to the glucosamine/galactosamine-6-phosphate isomerase family. NagB subfamily. In terms of assembly, homohexamer.

The enzyme catalyses alpha-D-glucosamine 6-phosphate + H2O = beta-D-fructose 6-phosphate + NH4(+). It functions in the pathway amino-sugar metabolism; N-acetylneuraminate degradation; D-fructose 6-phosphate from N-acetylneuraminate: step 5/5. Its activity is regulated as follows. Allosterically activated by N-acetylglucosamine 6-phosphate (GlcNAc6P). Its function is as follows. Catalyzes the reversible isomerization-deamination of glucosamine 6-phosphate (GlcN6P) to form fructose 6-phosphate (Fru6P) and ammonium ion. In Edwardsiella ictaluri (strain 93-146), this protein is Glucosamine-6-phosphate deaminase.